Consider the following 349-residue polypeptide: MDAIAARALSVVRACVTVTDARVSLDPGVMETLGIAINRYNGLTNHSVSMRPQTQAERNEMFFMCTDMVLAALNVQIGNVSPDYDQALATVGALATTEIPYNVQAMNDIVRITGQMQTFGPSKVQTGPYAGAVEVQQSGRYYVPQGRTRGGYINSNIAEVCMDAGAAGQVNALLAPRRGDAVMIYFVWRPLRIFCDPQGASLESAPGTFVTVDGVNVAAGDVVAWNTIAPVNVGNPGARRSILQFEVLWYTSLDRSLDTVPELAPTLTRCYAYVSPTWHALRAVIFQQMNMQPINPPIFPPTERNEIVAYLLVASLADVYAALRPDFRMNGVVAPVGQINRALVLAAYH.

Residue Asn-45 is glycosylated (N-linked (GlcNAc...) asparagine; by host).

Belongs to the orbivirus VP7 family. As to quaternary structure, homotrimer.

Its subcellular location is the virion. Functionally, major structural core protein; binds to structural protein VP3. Constitutes the surface of the AHSV core. This Camelus dromedarius (Dromedary) protein is Core protein VP7 (Segment-7).